Here is a 644-residue protein sequence, read N- to C-terminus: NADH-ubiquinone oxidoreductase chain 5 (644 aa).

The next 18 helical transmembrane spans lie at 4-23, 30-49, 78-100, 112-129, 133-155, 167-189, 199-221, 234-256, 271-293, 300-322, 327-349, 361-383, 398-420, 466-488, 517-539, 546-568, 594-616, and 623-642; these read FITL…RYIG, LNII…YINI, DLLS…IFAW, FYTY…LVLG, LILF…FWYN, LFIN…YIYK, LVSY…AASA, WAMA…IAGI, NILL…IAIN, IIAL…SSYN, HVLC…IHSL, GLLI…LMGL, SSIG…SSLL, SWMA…YLLQ, INIY…IIYL, LLYI…RFLF, GFLY…FNII, and FNHY…YLQF.

The protein belongs to the complex I subunit 5 family.

Its subcellular location is the mitochondrion inner membrane. The enzyme catalyses a ubiquinone + NADH + 5 H(+)(in) = a ubiquinol + NAD(+) + 4 H(+)(out). Core subunit of the mitochondrial membrane respiratory chain NADH dehydrogenase (Complex I) that is believed to belong to the minimal assembly required for catalysis. Complex I functions in the transfer of electrons from NADH to the respiratory chain. The immediate electron acceptor for the enzyme is believed to be ubiquinone. The protein is NADH-ubiquinone oxidoreductase chain 5 (ND5) of Wickerhamomyces canadensis (Yeast).